The chain runs to 268 residues: Undecaprenyl-diphosphatase (268 aa).

A run of 7 helical transmembrane segments spans residues 5 to 25 (TIAQ…IPVS), 43 to 63 (GKAF…SVYA), 84 to 104 (LGIL…YQII), 107 to 127 (VLFE…IVLL), 184 to 204 (AAEF…AYDL), 214 to 234 (ADLQ…VLVV), and 247 to 267 (ALFG…VLVL).

The protein belongs to the UppP family.

It is found in the cell inner membrane. It catalyses the reaction di-trans,octa-cis-undecaprenyl diphosphate + H2O = di-trans,octa-cis-undecaprenyl phosphate + phosphate + H(+). Functionally, catalyzes the dephosphorylation of undecaprenyl diphosphate (UPP). Confers resistance to bacitracin. The polypeptide is Undecaprenyl-diphosphatase (Chelativorans sp. (strain BNC1)).